The following is an 810-amino-acid chain: RING finger protein unkempt homolog (810 aa).

The disordered stretch occupies residues 1–24 (MSKGPGPGGSAASSAPPAATAQVL). Positions 10–19 (SAASSAPPAA) are enriched in low complexity. 5 C3H1-type zinc fingers span residues 84 to 113 (YSPDVYCTKYDEATGLCPEGDECPFLHRTT), 124 to 154 (YYKTGICIHETDSKGNCTKNGLHCAFAHGPH), 215 to 241 (NYKTEPCKKPPRLCRQGYACPYYHNSK), 251 to 285 (KYRSSPCPNVKHGDEWGDPGKCENGDACQYCHTRT), and 293 to 321 (IYKSTKCNDMQQAGSCPRGPFCAFAHIEP). Positions 239-265 (NSKDRRRSPRKHKYRSSPCPNVKHGDE) are disordered. Serine 240 is subject to Phosphoserine. Over residues 241–253 (KDRRRSPRKHKYR) the composition is skewed to basic residues. Phosphoserine is present on residues serine 374, serine 378, serine 385, and serine 394. The tract at residues 478–497 (TSSLAATPPSPAGTNSTPGM) is disordered. Serine 631 is modified (phosphoserine). A coiled-coil region spans residues 643-727 (GAAELARLRQ…ERLHTVPEAQ (85 aa)). The RING-type; degenerate zinc finger occupies 766–801 (SVKCLKCQEQTRAVLPCQHAVLCELCAEGSECPVCQ).

It belongs to the unkempt family.

The protein localises to the cytoplasm. Functionally, sequence-specific RNA-binding protein which plays an important role in the establishment and maintenance of the early morphology of cortical neurons during embryonic development. Acts as a translation repressor and controls a translationally regulated cell morphology program to ensure proper structuring of the nervous system. Translational control depends on recognition of its binding element within target mRNAs which consists of a mandatory UAG trimer upstream of a U/A-rich motif. Associated with polysomes. The polypeptide is RING finger protein unkempt homolog (Unk) (Mus musculus (Mouse)).